Consider the following 1525-residue polypeptide: Multidrug resistance protein mrp-7 (1525 aa).

Topologically, residues 1–24 (MLSSFCGDGHPFSTGLPNVSICAQ) are extracellular. N-linked (GlcNAc...) asparagine glycosylation occurs at N18. Residues 25–45 (HTVLVWVPAAFFLLTLPFLSA) traverse the membrane as a helical segment. Residues 46-66 (QCHLTAQRFARLPFSAHFIIK) are Cytoplasmic-facing. Residues 67–87 (LLLVAFLAANSLATWCYVLFS) traverse the membrane as a helical segment. The Extracellular segment spans residues 88–94 (KNSYAAA). A helical transmembrane segment spans residues 95–115 (YYVYPGLWVLVWTGTFLVHLI). Residues 116–118 (RLR) lie on the Cytoplasmic side of the membrane. A helical membrane pass occupies residues 119-139 (CGLVSSGIQHVTSLIFLLCGA). At 140-165 (PEFYQWIRMENSNSFPNDLTTTDSAQ) the chain is on the extracellular side. The chain crosses the membrane as a helical span at residues 166–186 (FLSIAYLSWYSALILYTFSLC). Over 187–346 (FADPRGAKTD…APFWKGMALS (160 aa)) the chain is Cytoplasmic. The ABC transmembrane type-1 1 domain maps to 305 to 587 (LLASTLKFVS…IALLINQAVQ (283 aa)). Residues 347 to 367 (ILMFSVSELRSLILNGYFYIM) form a helical membrane-spanning segment. The Extracellular segment spans residues 368-434 (FRMGTKIQTS…SCPYQITFAL (67 aa)). The chain crosses the membrane as a helical span at residues 435–455 (VYLFITLGYSALPGVVIMVIF). The Cytoplasmic segment spans residues 456–535 (VPMNIISSMI…NILDSFNTAS (80 aa)). A helical transmembrane segment spans residues 536-556 (PFLVALFSFGTFVLSNPSHLL). The Extracellular segment spans residues 557–561 (TPQIA). The helical transmembrane segment at 562-582 (FVSLALFNQLRSPMTMIALLI) threads the bilayer. Over 583–953 (NQAVQAVVSN…ATYQLYVKAA (371 aa)) the chain is Cytoplasmic. Residues 622-849 (VRVENLTASW…RGLFFDFMEE (228 aa)) enclose the ABC transporter 1 domain. ATP is bound at residue 659 to 666 (GKVGSGKS). Residues 900–925 (ELTTQISTMSSPEKPPTGTSPAAATE) are disordered. A helical membrane pass occupies residues 954–974 (GYLLSIAFIGFFIVYMTLQIL). The ABC transmembrane type-1 2 domain maps to 959-1245 (IAFIGFFIVY…AVRQVSEIEA (287 aa)). Over 975–1005 (RSFWLSAWSDEYDPDSPSAHPMAKGWRLGVY) the chain is Extracellular. A helical transmembrane segment spans residues 1006 to 1026 (GALGFSETACFFVALLALVFV). Topologically, residues 1027-1068 (GQRASKNLHGPLIHNLMRSPMSFYDTTPLGRILNRCAKDIET) are cytoplasmic. The chain crosses the membrane as a helical span at residues 1069-1089 (IDMMLPMNFRYLVMCVLQVAF). T1090 is a topological domain (extracellular). Residues 1091 to 1111 (LIVIIISTPLFAVVILPLALI) form a helical membrane-spanning segment. Topologically, residues 1112–1184 (YLIFLRYYVP…RYSSLVSNRW (73 aa)) are cytoplasmic. Residues 1185 to 1205 (LAVRLEFVGNCIIFFAALFAV) traverse the membrane as a helical segment. The Extracellular portion of the chain corresponds to 1206-1525 (LSKEFGWITS…ADAAEQDKHE (320 aa)). An N-linked (GlcNAc...) asparagine glycan is attached at N1228. Residues 1282-1516 (VKFDGYSTRY…KNSAFAKMVA (235 aa)) form the ABC transporter 2 domain. An ATP-binding site is contributed by 1316-1323 (GRTGAGKS). N-linked (GlcNAc...) asparagine glycosylation is found at N1358 and N1418.

It belongs to the ABC transporter superfamily. ABCC family. Conjugate transporter (TC 3.A.1.208) subfamily. Expressed in head neurons, including the dopamine (DA) motor neuron, and other cells in the body.

The protein localises to the cell membrane. In terms of biological role, negatively regulates cellular toxicity by mediating the export of environmental toxicants such as methylmercury out of the cell. Plays a role in inhibiting methylmercury-induced dopamine (DA) motor neuron degeneration. Not involved in Mn(2+)- or Al(3+)-associated toxicity. The polypeptide is Multidrug resistance protein mrp-7 (Caenorhabditis elegans).